The sequence spans 124 residues: Small ribosomal subunit protein uS13 (124 aa).

A disordered region spans residues 94–124 (RGLPVRGQRTKTNARTRKGPKRTIAGKKKAR).

Belongs to the universal ribosomal protein uS13 family. Part of the 30S ribosomal subunit. Forms a loose heterodimer with protein S19. Forms two bridges to the 50S subunit in the 70S ribosome.

Functionally, located at the top of the head of the 30S subunit, it contacts several helices of the 16S rRNA. In the 70S ribosome it contacts the 23S rRNA (bridge B1a) and protein L5 of the 50S subunit (bridge B1b), connecting the 2 subunits; these bridges are implicated in subunit movement. Contacts the tRNAs in the A and P-sites. This Mycolicibacterium vanbaalenii (strain DSM 7251 / JCM 13017 / BCRC 16820 / KCTC 9966 / NRRL B-24157 / PYR-1) (Mycobacterium vanbaalenii) protein is Small ribosomal subunit protein uS13.